The chain runs to 185 residues: Prenylated Rab acceptor protein 1 (185 aa).

The Cytoplasmic segment spans residues 1 to 78 (MAAQKDQQKD…RNVEYYQSNY (78 aa)). The interval 30–54 (AGREWLERRRATIRPWGTFVDQQRF) is required for interaction with prenylated RAB3A and VAMP2. A run of 2 helical transmembrane segments spans residues 79 to 94 (VFVF…VTSP) and 95 to 112 (MLLV…ILYL). At 113-131 (RTLQSKLVLFGREVSPAHQ) the chain is on the cytoplasmic side. Helical transmembrane passes span 132–148 (YALA…LAGA) and 149–165 (GSAV…LIGS). Residues 165 to 185 (SHAAFHQIEPADGEELQMEPV) form a required for interaction with GDI1 region. The Cytoplasmic segment spans residues 166–185 (HAAFHQIEPADGEELQMEPV). Positions 175-185 (ADGEELQMEPV) are required for interaction with prenylated RAB3A and VAMP2. Positions 175 to 185 (ADGEELQMEPV) are homodimerization.

It belongs to the PRA1 family. In terms of assembly, homodimers. Interacts specifically with both prenylated Rab proteins (including RAB3A and RAB1), and VAMP2 (synaptobrevin-2), in an exclusive way. Interacts with NDRG1. Interacts with free GDI1 in the absence of Rab proteins. Also interacts with PCLO. In terms of tissue distribution, ubiquitous.

It is found in the cell membrane. The protein localises to the cytoplasm. Its subcellular location is the golgi apparatus. It localises to the cytoplasmic vesicle. The protein resides in the secretory vesicle. It is found in the synaptic vesicle. In terms of biological role, general Rab protein regulator required for vesicle formation from the Golgi complex. May control vesicle docking and fusion by mediating the action of Rab GTPases to the SNARE complexes. In addition it inhibits the removal of Rab GTPases from the membrane by GDI1. The protein is Prenylated Rab acceptor protein 1 (Rabac1) of Rattus norvegicus (Rat).